The chain runs to 24 residues: 12 kDa protein (24 aa).

This is 12 kDa protein from Mycolicibacterium smegmatis (Mycobacterium smegmatis).